Here is a 291-residue protein sequence, read N- to C-terminus: Kidney mitochondrial carrier protein 1 (291 aa).

Position 2 is an N-acetylserine (serine 2). 3 Solcar repeats span residues 7-96 (KPFV…LKRL), 104-189 (ETLP…TKKH), and 198-289 (DTVY…LKKL). A run of 6 helical transmembrane segments spans residues 9–26 (FVYG…TFPI), 71–89 (GIAP…KIGT), 105–124 (TLPI…STIA), 164–183 (GVSL…LPVY), 204–224 (FLSS…VDVV), and 264–283 (GFWP…FVTY).

The protein belongs to the mitochondrial carrier (TC 2.A.29) family. As to quaternary structure, interacts with VDAC1.

Its subcellular location is the mitochondrion inner membrane. It catalyses the reaction sulfite(in) + sulfate(out) = sulfite(out) + sulfate(in). It carries out the reaction thiosulfate(in) + sulfate(out) = thiosulfate(out) + sulfate(in). The enzyme catalyses sulfate(out) + phosphate(in) = sulfate(in) + phosphate(out). The catalysed reaction is oxalate(in) + sulfate(out) = oxalate(out) + sulfate(in). It catalyses the reaction malonate(in) + sulfate(out) = malonate(out) + sulfate(in). It carries out the reaction maleate(in) + sulfate(out) = maleate(out) + sulfate(in). The enzyme catalyses (S)-malate(in) + sulfate(out) = (S)-malate(out) + sulfate(in). The catalysed reaction is (3S)-citramalate(in) + sulfate(out) = (3S)-citramalate(out) + sulfate(in). It catalyses the reaction (3R)-citramalate(in) + sulfate(out) = (3R)-citramalate(out) + sulfate(in). It carries out the reaction sulfate(out) + succinate(in) = sulfate(in) + succinate(out). The enzyme catalyses (S,S)-tartrate(in) + sulfate(out) = (S,S)-tartrate(out) + sulfate(in). The catalysed reaction is (2R,3R)-tartrate(in) + sulfate(out) = (2R,3R)-tartrate(out) + sulfate(in). It catalyses the reaction D-aspartate(in) + sulfate(out) = D-aspartate(out) + sulfate(in). It carries out the reaction L-aspartate(in) + sulfate(out) = L-aspartate(out) + sulfate(in). The enzyme catalyses sulfate(in) = sulfate(out). The catalysed reaction is phosphate(in) = phosphate(out). It catalyses the reaction (S)-malate(out) = (S)-malate(in). Increased activity at pH 6.0. sulfate/sulfate exchange activity is inhibited strongly by pyridoxal 5'-phosphate, bathophenanthroline and the organic mercurials mersalyl, p-chloromercuribenzoate and HgCl2. Its function is as follows. Antiporter that transports inorganic anions (sulfate, sulfite, thiosulfate and phosphate) and, to a lesser extent, a variety of dicarboxylates (e.g. malonate, malate and citramalate) and, even more so, aspartate. The sulfate/sulfate exchange is much higher than the phosphate/phosphate and malate/malate exchanges. The transport affinities is higher for sulfate and thiosulfate than for any other substrate. May catalyze the export of sulfite and thiosulfate (the hydrogen sulfide degradation products) from the mitochondria, thereby modulating the level of the hydrogen sulfide. Also may mediate a very low unidirectional transport of sulfate, phosphate and (S)-malate. In Homo sapiens (Human), this protein is Kidney mitochondrial carrier protein 1.